Consider the following 122-residue polypeptide: MIQMQSLLKVADNTGARTVMCIKVLGGSKRRFAGIGDVIKVAVKDAAPRGRIKKGEVYNAVIVRTAKGIRRSDGSLVKFDTNAAVILNNKLEPIGTRIFGPVTRELRTAKFMKIVSLAPEVI.

It belongs to the universal ribosomal protein uL14 family. As to quaternary structure, part of the 50S ribosomal subunit. Forms a cluster with proteins L3 and L19. In the 70S ribosome, L14 and L19 interact and together make contacts with the 16S rRNA in bridges B5 and B8.

Its function is as follows. Binds to 23S rRNA. Forms part of two intersubunit bridges in the 70S ribosome. This is Large ribosomal subunit protein uL14 from Nitrosomonas eutropha (strain DSM 101675 / C91 / Nm57).